The sequence spans 298 residues: ATP synthase gamma chain (298 aa).

This sequence belongs to the ATPase gamma chain family. F-type ATPases have 2 components, CF(1) - the catalytic core - and CF(0) - the membrane proton channel. CF(1) has five subunits: alpha(3), beta(3), gamma(1), delta(1), epsilon(1). CF(0) has three main subunits: a, b and c.

It is found in the cell inner membrane. Its function is as follows. Produces ATP from ADP in the presence of a proton gradient across the membrane. The gamma chain is believed to be important in regulating ATPase activity and the flow of protons through the CF(0) complex. This Bacteroides thetaiotaomicron (strain ATCC 29148 / DSM 2079 / JCM 5827 / CCUG 10774 / NCTC 10582 / VPI-5482 / E50) protein is ATP synthase gamma chain.